The chain runs to 382 residues: Serine/threonine-protein kinase (382 aa).

Over residues 1–10 (MENKQCDHLT) the composition is skewed to basic and acidic residues. A disordered region spans residues 1–75 (MENKQCDHLT…ASESDEDDDD (75 aa)). The segment covering 12 to 24 (WFSTTSDASESMD) has biased composition (polar residues). Residues 45–75 (ADEDLYSDISEGDLEYSDCDSASESDEDDDD) are compositionally biased toward acidic residues. One can recognise a Protein kinase domain in the interval 93 to 379 (YTVIKTLTPG…AEELLSYPMF (287 aa)). ATP contacts are provided by residues 99–107 (LTPGSEGRV) and Lys-122. Asp-207 (proton acceptor) is an active-site residue.

It belongs to the protein kinase superfamily. Ser/Thr protein kinase family.

It catalyses the reaction L-seryl-[protein] + ATP = O-phospho-L-seryl-[protein] + ADP + H(+). The enzyme catalyses L-threonyl-[protein] + ATP = O-phospho-L-threonyl-[protein] + ADP + H(+). The protein is Serine/threonine-protein kinase (US2) of Equus caballus (Horse).